A 326-amino-acid polypeptide reads, in one-letter code: Fructose-1,6-bisphosphatase class 1 2 (326 aa).

Residues E84, D103, L105, and D106 each coordinate Mg(2+). Substrate contacts are provided by residues 106-109 (DGSS), N198, and K262. A Mg(2+)-binding site is contributed by E268.

The protein belongs to the FBPase class 1 family. Homotetramer. The cofactor is Mg(2+).

The protein resides in the cytoplasm. It carries out the reaction beta-D-fructose 1,6-bisphosphate + H2O = beta-D-fructose 6-phosphate + phosphate. It functions in the pathway carbohydrate biosynthesis; gluconeogenesis. The polypeptide is Fructose-1,6-bisphosphatase class 1 2 (Pseudoalteromonas translucida (strain TAC 125)).